We begin with the raw amino-acid sequence, 217 residues long: Proteasome subunit beta (217 aa).

Positions 1-14 are cleaved as a propeptide — removed in mature form; by autocatalysis; that stretch reads MIANNDQYKEYMKG. Thr15 functions as the Nucleophile in the catalytic mechanism.

This sequence belongs to the peptidase T1B family. As to quaternary structure, the 20S proteasome core is composed of 14 alpha and 14 beta subunits that assemble into four stacked heptameric rings, resulting in a barrel-shaped structure. The two inner rings, each composed of seven catalytic beta subunits, are sandwiched by two outer rings, each composed of seven alpha subunits. The catalytic chamber with the active sites is on the inside of the barrel. Has a gated structure, the ends of the cylinder being occluded by the N-termini of the alpha-subunits. Is capped at one or both ends by the proteasome regulatory ATPase, PAN.

It is found in the cytoplasm. The catalysed reaction is Cleavage of peptide bonds with very broad specificity.. The formation of the proteasomal ATPase PAN-20S proteasome complex, via the docking of the C-termini of PAN into the intersubunit pockets in the alpha-rings, triggers opening of the gate for substrate entry. Interconversion between the open-gate and close-gate conformations leads to a dynamic regulation of the 20S proteasome proteolysis activity. Functionally, component of the proteasome core, a large protease complex with broad specificity involved in protein degradation. In Methanococcus aeolicus (strain ATCC BAA-1280 / DSM 17508 / OCM 812 / Nankai-3), this protein is Proteasome subunit beta.